The sequence spans 82 residues: Small ribosomal subunit protein bS16 (82 aa).

Belongs to the bacterial ribosomal protein bS16 family.

This is Small ribosomal subunit protein bS16 from Vibrio atlanticus (strain LGP32) (Vibrio splendidus (strain Mel32)).